Here is a 297-residue protein sequence, read N- to C-terminus: HTH-type transcriptional regulator ArgP (297 aa).

The HTH lysR-type domain maps to 4–60 (PDYRTLQALDAVIRERGFERAAQKLCITQSAVSQRIKQLENMFGQPLLVRTVPPRPT). The H-T-H motif DNA-binding region spans 21-40 (FERAAQKLCITQSAVSQRIK).

This sequence belongs to the LysR transcriptional regulatory family. As to quaternary structure, homodimer.

Functionally, controls the transcription of genes involved in arginine and lysine metabolism. The protein is HTH-type transcriptional regulator ArgP of Salmonella choleraesuis (strain SC-B67).